The following is a 321-amino-acid chain: Ribose-phosphate pyrophosphokinase (321 aa).

Residues 44–46 (DGE) and 103–104 (RQ) each bind ATP. Positions 137 and 179 each coordinate Mg(2+). Residue K202 is part of the active site. Residues R204, D228, and 232–236 (DTAGT) contribute to the D-ribose 5-phosphate site.

It belongs to the ribose-phosphate pyrophosphokinase family. Class I subfamily. In terms of assembly, homohexamer. Requires Mg(2+) as cofactor.

It is found in the cytoplasm. The catalysed reaction is D-ribose 5-phosphate + ATP = 5-phospho-alpha-D-ribose 1-diphosphate + AMP + H(+). Its pathway is metabolic intermediate biosynthesis; 5-phospho-alpha-D-ribose 1-diphosphate biosynthesis; 5-phospho-alpha-D-ribose 1-diphosphate from D-ribose 5-phosphate (route I): step 1/1. In terms of biological role, involved in the biosynthesis of the central metabolite phospho-alpha-D-ribosyl-1-pyrophosphate (PRPP) via the transfer of pyrophosphoryl group from ATP to 1-hydroxyl of ribose-5-phosphate (Rib-5-P). In Staphylococcus saprophyticus subsp. saprophyticus (strain ATCC 15305 / DSM 20229 / NCIMB 8711 / NCTC 7292 / S-41), this protein is Ribose-phosphate pyrophosphokinase.